A 229-amino-acid polypeptide reads, in one-letter code: Uracil-DNA glycosylase (229 aa).

Asp-64 serves as the catalytic Proton acceptor.

The protein belongs to the uracil-DNA glycosylase (UDG) superfamily. UNG family.

Its subcellular location is the cytoplasm. The catalysed reaction is Hydrolyzes single-stranded DNA or mismatched double-stranded DNA and polynucleotides, releasing free uracil.. Functionally, excises uracil residues from the DNA which can arise as a result of misincorporation of dUMP residues by DNA polymerase or due to deamination of cytosine. In Geobacillus kaustophilus (strain HTA426), this protein is Uracil-DNA glycosylase.